A 576-amino-acid polypeptide reads, in one-letter code: Arginine--tRNA ligase (576 aa).

The short motif at 122-132 is the 'HIGH' region element; it reads PNVAKEMHVGH.

The protein belongs to the class-I aminoacyl-tRNA synthetase family. As to quaternary structure, monomer.

The protein localises to the cytoplasm. It carries out the reaction tRNA(Arg) + L-arginine + ATP = L-arginyl-tRNA(Arg) + AMP + diphosphate. In Serratia proteamaculans (strain 568), this protein is Arginine--tRNA ligase.